A 338-amino-acid chain; its full sequence is Tryptophan--tRNA ligase (338 aa).

ATP is bound by residues 11–13 (QPS) and 19–20 (GN). The short motif at 12-20 (PSGELSIGN) is the 'HIGH' region element. Aspartate 135 contacts L-tryptophan. Residues 147 to 149 (GSD), valine 189, and 198 to 202 (KMSKS) contribute to the ATP site. The 'KMSKS' region signature appears at 198–202 (KMSKS).

The protein belongs to the class-I aminoacyl-tRNA synthetase family. In terms of assembly, homodimer.

It localises to the cytoplasm. The catalysed reaction is tRNA(Trp) + L-tryptophan + ATP = L-tryptophyl-tRNA(Trp) + AMP + diphosphate + H(+). Its function is as follows. Catalyzes the attachment of tryptophan to tRNA(Trp). The chain is Tryptophan--tRNA ligase from Vibrio cholerae serotype O1 (strain ATCC 39315 / El Tor Inaba N16961).